The chain runs to 965 residues: MDRGLSTGTNQSGAGLRERAVTSQADLNVITENPTVTNASNGKDKAGKTFGRTPDGTVFTVPQTHDMVSQLLSPSEPKNLSDLVVLTILAGHIFLLWILPSGAKIPVFAVIYLFWRSCYNAGIGWLLHNQSHHKTLVRWAEKSQIFVNPATGKNPYPQLYHLIKRELEIKISKDYSFEEAPLEYNTWLVFRRLVDLILMCDFASYCLFAIACSRHPANESVLMTVIRWTSGIALVLFNLWVKLDAHRVVKDYAWYWGDFFYLIDQELTFDGVFEMAPHPMYSVGYAGYYGISLMAASYKVLFISIIAHAAQFAFLVLVENPHIDKTYNPPPPRKRTITEHDAASQRSQSPDTPNAPSVSEENVPNATTFSSPPPAVHNLLGFHNLDLHRITDTSSILVQFLMFSLTVLTPSTPWYQFLFVANAAIWRLWYSVGIGYLLNRQSNCKSWTRHFVKYGETPHEAWNQWKGTYHLSMVMCYASFISAVWKMYTLPSNWGYGLAILRHVLGAGLISLQIWTSVSIYESLGEFGWFYGDFFFDESPKLTYNGIYRFLNNPERVLGLAGVWGAVLITASGTVAFLAFLSHILSLGFIQFVERPHMQKLYGRSLRQDAGLVKSLKRSLPPSLRQLHGSVDKIFDESYEFIEEIIDTARPKLAAGVNTFVRDTTALFQKYPARVTISRIDADLAGYDLRDYSLTVEASQLPLDEGDLSKEGDNARTPLDRRGDLENLVFPYGTPVKVKWTAPLNHSKKDWIGLYKVTDNTSREVTRVSSQGRWVAVNEGFYDNLTCERGILISDVVVSTSQGDNGEKHDIATGEVVFSGDKLFWTQGVFEFRYHHNGKHNVMAISRPFEVRIPRFEEEDHFDMSQTAVETSLLPVIQNCFDRDPEIAPETPEEQYGSLVERDGKFAKRVVFAVHQMFGVEFAPEVVRSDGNVRNLAWRICNAKRVLAPYSMSRDGATTPTESKE.

Residues 1-82 (MDRGLSTGTN…SPSEPKNLSD (82 aa)) are Lumenal-facing. The tract at residues 34–54 (PTVTNASNGKDKAGKTFGRTP) is disordered. A helical membrane pass occupies residues 83–103 (LVVLTILAGHIFLLWILPSGA). Topologically, residues 104–106 (KIP) are cytoplasmic. Residues 107–127 (VFAVIYLFWRSCYNAGIGWLL) form a helical membrane-spanning segment. Residues 128–192 (HNQSHHKTLV…EYNTWLVFRR (65 aa)) are Lumenal-facing. A helical membrane pass occupies residues 193-213 (LVDLILMCDFASYCLFAIACS). Residues 214–220 (RHPANES) are Cytoplasmic-facing. The helical transmembrane segment at 221 to 241 (VLMTVIRWTSGIALVLFNLWV) threads the bilayer. Over 242–274 (KLDAHRVVKDYAWYWGDFFYLIDQELTFDGVFE) the chain is Lumenal. A helical membrane pass occupies residues 275–295 (MAPHPMYSVGYAGYYGISLMA). The Cytoplasmic segment spans residues 296–297 (AS). A helical transmembrane segment spans residues 298–318 (YKVLFISIIAHAAQFAFLVLV). Topologically, residues 319-394 (ENPHIDKTYN…LDLHRITDTS (76 aa)) are lumenal. The segment at 326-368 (TYNPPPPRKRTITEHDAASQRSQSPDTPNAPSVSEENVPNATT) is disordered. Residues 344 to 368 (SQRSQSPDTPNAPSVSEENVPNATT) are compositionally biased toward polar residues. A helical membrane pass occupies residues 395-415 (SILVQFLMFSLTVLTPSTPWY). A topological domain (cytoplasmic) is located at residue glutamine 416. A helical membrane pass occupies residues 417 to 437 (FLFVANAAIWRLWYSVGIGYL). Over 438-470 (LNRQSNCKSWTRHFVKYGETPHEAWNQWKGTYH) the chain is Lumenal. A helical membrane pass occupies residues 471-491 (LSMVMCYASFISAVWKMYTLP). Residues 492-503 (SNWGYGLAILRH) are Cytoplasmic-facing. The chain crosses the membrane as a helical span at residues 504–524 (VLGAGLISLQIWTSVSIYESL). Residues 525–559 (GEFGWFYGDFFFDESPKLTYNGIYRFLNNPERVLG) lie on the Lumenal side of the membrane. A helical transmembrane segment spans residues 560–580 (LAGVWGAVLITASGTVAFLAF). Topologically, residues 581-965 (LSHILSLGFI…GATTPTESKE (385 aa)) are cytoplasmic.

The protein belongs to the class VI-like SAM-binding methyltransferase superfamily. CHO2 family.

It is found in the endoplasmic reticulum membrane. The enzyme catalyses a 1,2-diacyl-sn-glycero-3-phosphoethanolamine + S-adenosyl-L-methionine = a 1,2-diacyl-sn-glycero-3-phospho-N-methylethanolamine + S-adenosyl-L-homocysteine + H(+). It participates in phospholipid metabolism; phosphatidylcholine biosynthesis. In terms of biological role, catalyzes the first step of the methylation pathway of phosphatidylcholine biosynthesis, the SAM-dependent methylation of phosphatidylethanolamine (PE) to phosphatidylmonomethylethanolamine (PMME). The protein is Phosphatidylethanolamine N-methyltransferase of Emericella nidulans (strain FGSC A4 / ATCC 38163 / CBS 112.46 / NRRL 194 / M139) (Aspergillus nidulans).